Here is a 208-residue protein sequence, read N- to C-terminus: Histone H1.3 (208 aa).

N-acetylserine is present on Ser2. The 77-residue stretch at 37 to 113 (AHPPYINMVT…GASGRFRVTE (77 aa)) folds into the H15 domain. The segment at 113–208 (EKKAAAAKKP…PAKKAVAPKT (96 aa)) is disordered. Composition is skewed to basic residues over residues 148–158 (KAKKTTATKTK) and 165–191 (KKVKSPKKIAKPTAKKVAKSPAKKSAP). Low complexity predominate over residues 192 to 208 (KKAAAAKPAKKAVAPKT).

It belongs to the histone H1/H5 family.

The protein resides in the nucleus. Its subcellular location is the chromosome. Histones H1 are necessary for the condensation of nucleosome chains into higher-order structures. The chain is Histone H1.3 (hil-3) from Caenorhabditis elegans.